A 195-amino-acid chain; its full sequence is ATP-dependent Clp protease proteolytic subunit 1 (195 aa).

Residue S96 is the Nucleophile of the active site. H121 is an active-site residue.

The protein belongs to the peptidase S14 family. As to quaternary structure, fourteen ClpP subunits assemble into 2 heptameric rings which stack back to back to give a disk-like structure with a central cavity, resembling the structure of eukaryotic proteasomes.

The protein localises to the cytoplasm. The enzyme catalyses Hydrolysis of proteins to small peptides in the presence of ATP and magnesium. alpha-casein is the usual test substrate. In the absence of ATP, only oligopeptides shorter than five residues are hydrolyzed (such as succinyl-Leu-Tyr-|-NHMec, and Leu-Tyr-Leu-|-Tyr-Trp, in which cleavage of the -Tyr-|-Leu- and -Tyr-|-Trp bonds also occurs).. Its function is as follows. Cleaves peptides in various proteins in a process that requires ATP hydrolysis. Has a chymotrypsin-like activity. Plays a major role in the degradation of misfolded proteins. This chain is ATP-dependent Clp protease proteolytic subunit 1, found in Prochlorococcus marinus (strain MIT 9312).